Reading from the N-terminus, the 278-residue chain is MATH domain and coiled-coil domain-containing protein At1g31400 (278 aa).

One can recognise an MATH domain in the interval 6-131; that stretch reads EKRITWTIKN…SGQVKIVAEV (126 aa). Positions 232–267 form a coiled coil; the sequence is KLDWLEKKLKEVGKTRMQQLEQNLKDLKESLCWSSD.

The chain is MATH domain and coiled-coil domain-containing protein At1g31400 from Arabidopsis thaliana (Mouse-ear cress).